Reading from the N-terminus, the 460-residue chain is Dynactin subunit 4 (460 aa).

A2 carries the post-translational modification N-acetylalanine. Residues 152 to 172 (QQLAQKEKVERDRKKLARRRN) are a coiled coil. S196 bears the Phosphoserine mark. K215 participates in a covalent cross-link: Glycyl lysine isopeptide (Lys-Gly) (interchain with G-Cter in SUMO2). Phosphothreonine is present on T407.

This sequence belongs to the dynactin subunit 4 family. Subunit of dynactin, a multiprotein complex part of a tripartite complex with dynein and a adapter, such as BICDL1, BICD2 or HOOK3. The dynactin complex is built around ACTR1A/ACTB filament and consists of an actin-related filament composed of a shoulder domain, a pointed end and a barbed end. Its length is defined by its flexible shoulder domain. The soulder is composed of 2 DCTN1 subunits, 4 DCTN2 and 2 DCTN3. The 4 DCNT2 (via N-terminus) bind the ACTR1A filament and act as molecular rulers to determine the length. The pointed end is important for binding dynein-dynactin cargo adapters. Consists of 4 subunits: ACTR10, DCNT4, DCTN5 and DCTN6. The barbed end is composed of a CAPZA1:CAPZB heterodimers, which binds ACTR1A/ACTB filament and dynactin and stabilizes dynactin. Interacts with ATP7B, but not ATP7A, in a copper-dependent manner. Interacts with ANK2; this interaction is required for localization at costameres. Interacts with N4BP2L1.

The protein resides in the cytoplasm. Its subcellular location is the cytoskeleton. It is found in the microtubule organizing center. The protein localises to the centrosome. It localises to the stress fiber. The protein resides in the cell cortex. Its subcellular location is the myofibril. It is found in the sarcomere. In terms of biological role, part of the dynactin complex that activates the molecular motor dynein for ultra-processive transport along microtubules. The sequence is that of Dynactin subunit 4 from Homo sapiens (Human).